A 139-amino-acid chain; its full sequence is Transcription antitermination protein NusB (139 aa).

It belongs to the NusB family.

Its function is as follows. Involved in transcription antitermination. Required for transcription of ribosomal RNA (rRNA) genes. Binds specifically to the boxA antiterminator sequence of the ribosomal RNA (rrn) operons. The sequence is that of Transcription antitermination protein NusB from Erwinia tasmaniensis (strain DSM 17950 / CFBP 7177 / CIP 109463 / NCPPB 4357 / Et1/99).